Here is a 138-residue protein sequence, read N- to C-terminus: uncharacterized protein (138 aa).

This is an uncharacterized protein from Archaeoglobus fulgidus (strain ATCC 49558 / DSM 4304 / JCM 9628 / NBRC 100126 / VC-16).